Here is a 691-residue protein sequence, read N- to C-terminus: Gex-3-interacting protein 13 (691 aa).

2 disordered regions span residues 18-97 and 171-195; these read TASL…SAHL and PASPCTTAASAPSVESTPTKRKRQR. Positions 31–46 are enriched in low complexity; that stretch reads SSFTTTSESTSPPYSS. Positions 47–57 are enriched in basic and acidic residues; the sequence is SEHHSPTDQRT. Residues 58–79 are compositionally biased toward polar residues; sequence ETPTSDSGNASFSPENVATSFE. Residues 171–183 show a composition bias toward low complexity; sequence PASPCTTAASAPS. 2 consecutive BED-type zinc fingers follow at residues 194–242 and 424–473; these read QRRN…YEKV and LRRH…YEKV. Residues Cys212, Cys215, His230, His235, Cys443, Cys446, His461, and His466 each contribute to the Zn(2+) site.

As to quaternary structure, interacts with gex-3.

The sequence is that of Gex-3-interacting protein 13 (gei-13) from Caenorhabditis elegans.